A 368-amino-acid chain; its full sequence is Glutamate 5-kinase (368 aa).

Position 12 (lysine 12) interacts with ATP. Substrate contacts are provided by serine 52, aspartate 139, and asparagine 151. Residues 171–172 and 213–219 contribute to the ATP site; these read SD and TGGMKTK. The PUA domain maps to 277-354; that stretch reads KGALIIDDGA…KEIEKLLGYI (78 aa).

Belongs to the glutamate 5-kinase family.

Its subcellular location is the cytoplasm. The catalysed reaction is L-glutamate + ATP = L-glutamyl 5-phosphate + ADP. Its pathway is amino-acid biosynthesis; L-proline biosynthesis; L-glutamate 5-semialdehyde from L-glutamate: step 1/2. Functionally, catalyzes the transfer of a phosphate group to glutamate to form L-glutamate 5-phosphate. In Pelagibacter ubique (strain HTCC1062), this protein is Glutamate 5-kinase.